A 493-amino-acid chain; its full sequence is Glutamyl-tRNA(Gln) amidotransferase subunit A (493 aa).

Catalysis depends on charge relay system residues K79 and S159. Residue S183 is the Acyl-ester intermediate of the active site.

This sequence belongs to the amidase family. GatA subfamily. In terms of assembly, heterotrimer of A, B and C subunits.

The enzyme catalyses L-glutamyl-tRNA(Gln) + L-glutamine + ATP + H2O = L-glutaminyl-tRNA(Gln) + L-glutamate + ADP + phosphate + H(+). In terms of biological role, allows the formation of correctly charged Gln-tRNA(Gln) through the transamidation of misacylated Glu-tRNA(Gln) in organisms which lack glutaminyl-tRNA synthetase. The reaction takes place in the presence of glutamine and ATP through an activated gamma-phospho-Glu-tRNA(Gln). In Sinorhizobium medicae (strain WSM419) (Ensifer medicae), this protein is Glutamyl-tRNA(Gln) amidotransferase subunit A.